The following is a 258-amino-acid chain: Chymotrypsin-like elastase family member 1 (258 aa).

A signal peptide spans 1–8 (MLVLYGHS). Residues 9-18 (TQDLPETNAR) constitute a propeptide, activation peptide. Residues 19–256 (VVGGTEAGRN…YISWINNVIA (238 aa)) enclose the Peptidase S1 domain. Residues C48 and C64 are joined by a disulfide bond. H63 acts as the Charge relay system in catalysis. Positions 77, 79, 82, and 87 each coordinate Ca(2+). The N-linked (GlcNAc...) asparagine glycan is linked to N79. D111 (charge relay system) is an active-site residue. 3 disulfide bridges follow: C145–C212, C176–C192, and C202–C232. S206 acts as the Charge relay system in catalysis. N-linked (GlcNAc...) asparagine glycosylation occurs at N233.

The protein belongs to the peptidase S1 family. Elastase subfamily. Requires Ca(2+) as cofactor. Basal layers of epidermis (at protein level). Not expressed in the pancreas.

It is found in the secreted. It catalyses the reaction Hydrolysis of proteins, including elastin. Preferential cleavage: Ala-|-Xaa.. In terms of biological role, serine proteases that hydrolyze many proteins in addition to elastin. The protein is Chymotrypsin-like elastase family member 1 (CELA1) of Homo sapiens (Human).